The sequence spans 293 residues: Methylsterol monooxygenase 1 (293 aa).

Helical transmembrane passes span 55–75 (LIVHEAIYFLFSLPGFLFQFI) and 100–120 (KILFNHFFIQLPLICGTYYFT). The Fatty acid hydroxylase domain maps to 144-274 (GCAVIEDTWH…FTWWDKLFGT (131 aa)). The Histidine box-1 motif lies at 157–161 (HRLLH). A Histidine box-2 motif is present at residues 170 to 174 (HKVHH). A helical transmembrane segment spans residues 199-219 (FFIGIVLLCDHVILLWAWVTI). Residues 249 to 255 (HHDFHHM) carry the Histidine box-3 motif.

It belongs to the sterol desaturase family. Fe cation serves as cofactor. Post-translationally, ubiquitinated by MARCHF6, leading to proteasomal degradation.

The protein localises to the endoplasmic reticulum membrane. It catalyses the reaction 4,4-dimethyl-5alpha-cholest-7-en-3beta-ol + 6 Fe(II)-[cytochrome b5] + 3 O2 + 5 H(+) = 4alpha-carboxy-4beta-methyl-5alpha-cholest-7-ene-3beta-ol + 6 Fe(III)-[cytochrome b5] + 4 H2O. The enzyme catalyses 4,4-dimethyl-5alpha-cholesta-8,24-dien-3beta-ol + 6 Fe(II)-[cytochrome b5] + 3 O2 + 5 H(+) = 4beta-methylzymosterol-4alpha-carboxylate + 6 Fe(III)-[cytochrome b5] + 4 H2O. The catalysed reaction is 4alpha-methylzymosterol + 6 Fe(II)-[cytochrome b5] + 3 O2 + 5 H(+) = 4alpha-carboxyzymosterol + 6 Fe(III)-[cytochrome b5] + 4 H2O. It carries out the reaction 4alpha-methyl-5alpha-cholest-7-en-3beta-ol + 6 Fe(II)-[cytochrome b5] + 3 O2 + 5 H(+) = 4alpha-carboxy-5alpha-cholest-7-en-3beta-ol + 6 Fe(III)-[cytochrome b5] + 4 H2O. It catalyses the reaction 4,4-dimethyl-5alpha-cholest-8-en-3beta-ol + 6 Fe(II)-[cytochrome b5] + 3 O2 + 5 H(+) = 4alpha-carboxy-4beta-methyl-5alpha-cholest-8-en-3beta-ol + 6 Fe(III)-[cytochrome b5] + 4 H2O. The enzyme catalyses 4alpha-methyl-5alpha-cholest-8-en-3beta-ol + 6 Fe(II)-[cytochrome b5] + 3 O2 + 5 H(+) = 4alpha-carboxy-5alpha-cholest-8-ene-3beta-ol + 6 Fe(III)-[cytochrome b5] + 4 H2O. It functions in the pathway steroid biosynthesis; zymosterol biosynthesis; zymosterol from lanosterol: step 3/6. It participates in steroid biosynthesis; cholesterol biosynthesis. In terms of biological role, catalyzes the three-step monooxygenation required for the demethylation of 4,4-dimethyl and 4alpha-methylsterols, which can be subsequently metabolized to cholesterol. The polypeptide is Methylsterol monooxygenase 1 (Msmo1) (Mus musculus (Mouse)).